Here is a 356-residue protein sequence, read N- to C-terminus: Chaperone protein DnaJ (356 aa).

The region spanning 5 to 69 is the J domain; that stretch reads DYYQILGVSK…ERRKEYDRIL (65 aa). A CR-type zinc finger spans residues 121–197; that stretch reads GCEKDIEYER…CSGRGRVAMH (77 aa). Zn(2+) contacts are provided by Cys134, Cys137, Cys151, Cys154, Cys171, Cys174, Cys185, and Cys188. CXXCXGXG motif repeat units follow at residues 134-141, 151-158, 171-178, and 185-192; these read CPTCEGKG, CHACEGTG, CSVCKGRG, and CPACSGRG.

This sequence belongs to the DnaJ family. In terms of assembly, homodimer. The cofactor is Zn(2+).

It is found in the cytoplasm. In terms of biological role, participates actively in the response to hyperosmotic and heat shock by preventing the aggregation of stress-denatured proteins and by disaggregating proteins, also in an autonomous, DnaK-independent fashion. Unfolded proteins bind initially to DnaJ; upon interaction with the DnaJ-bound protein, DnaK hydrolyzes its bound ATP, resulting in the formation of a stable complex. GrpE releases ADP from DnaK; ATP binding to DnaK triggers the release of the substrate protein, thus completing the reaction cycle. Several rounds of ATP-dependent interactions between DnaJ, DnaK and GrpE are required for fully efficient folding. Also involved, together with DnaK and GrpE, in the DNA replication of plasmids through activation of initiation proteins. The polypeptide is Chaperone protein DnaJ (Hydrogenobacter thermophilus (strain DSM 6534 / IAM 12695 / TK-6)).